We begin with the raw amino-acid sequence, 37 residues long: Photosystem II reaction center protein L (37 aa).

The Cytoplasmic segment spans residues M1 to N13. A helical membrane pass occupies residues R14–F35. The Lumenal segment spans residues F36–N37.

PSII is composed of 1 copy each of membrane proteins PsbA, PsbB, PsbC, PsbD, PsbE, PsbF, PsbH, PsbI, PsbJ, PsbK, PsbL, PsbM, PsbT, PsbX, PsbY, PsbZ, Psb30/Ycf12, peripheral proteins PsbO, CyanoQ (PsbQ), PsbU, PsbV and a large number of cofactors. It forms dimeric complexes. Part of a photosystem II (PSII) assembly intermediate complex PSII-I; crystallized from a strain deleted of psbJ, it forms monomeric PSII before addition of the oxygen evolving complex. PSII-I includes 3 assembly factors not found in mature PSII (Psb27, Psb28 and Psb34). Requires PSII binds multiple chlorophylls, carotenoids and specific lipids. as cofactor.

It is found in the cellular thylakoid membrane. In terms of biological role, one of the components of the core complex of photosystem II (PSII). PSII is a light-driven water:plastoquinone oxidoreductase that uses light energy to abstract electrons from H(2)O, generating O(2) and a proton gradient subsequently used for ATP formation. It consists of a core antenna complex that captures photons, and an electron transfer chain that converts photonic excitation into a charge separation. This subunit is found at the monomer-monomer interface and is required for correct PSII assembly and/or dimerization. This subunit may make specific contacts with lipid(s). This chain is Photosystem II reaction center protein L, found in Thermosynechococcus vestitus (strain NIES-2133 / IAM M-273 / BP-1).